We begin with the raw amino-acid sequence, 1004 residues long: Receptor-type tyrosine-protein phosphatase N2 (1004 aa).

Residues 1–27 (MGLPLPLLLLLLLPPPLPRALPAPASA) form the signal peptide. The involved in localization to secretory granules; interaction with CPE stretch occupies residues 1–409 (MGLPLPLLLL…PEAPLLEKSS (409 aa)). Topologically, residues 28–603 (RGRQLPGRLG…HPEEQEDSTK (576 aa)) are extracellular. Residue arginine 259 is modified to Omega-N-methylarginine. Disordered stretches follow at residues 274–294 (APALSQRWPLPPGDSKDSLSM), 333–360 (QSDPVEGSQESHGRGAEGQLREQADAPE), and 393–459 (DHGS…WRLE). Serine 340 is subject to Phosphoserine. 2 stretches are compositionally biased toward basic and acidic residues: residues 341-356 (QESHGRGAEGQLREQA) and 407-418 (KSSRAEMKKSEQ). Positions 419–430 (PEEVLSSEEETA) are enriched in acidic residues. A phosphoserine mark is found at serine 424 and serine 425. The segment covering 431-450 (GVEHVKSRTYSKDLLERKPN) has biased composition (basic and acidic residues). N-linked (GlcNAc...) asparagine glycosylation occurs at asparagine 553. A helical membrane pass occupies residues 604-624 (FIVLTFLSIACILAVLLASSL). Over 625 to 1004 (AYCLRHNSHY…VNAILKALPQ (380 aa)) the chain is Cytoplasmic. Positions 655–664 (YQELCRQRMA) match the Tyrosine-based internalization motif motif. The tract at residues 665 to 710 (VRPQDHSEGPHTSRINSVSSQLSDGPMPSPSARSSTSSWSEEPAQS) is disordered. The segment covering 677 to 687 (SRINSVSSQLS) has biased composition (polar residues). Serine 681 is subject to Phosphoserine; by PKA. Serine 687 carries the post-translational modification Phosphoserine. Over residues 694–710 (PSARSSTSSWSEEPAQS) the composition is skewed to low complexity. Threonine 700 carries the phosphothreonine; by PKA modification. The 261-residue stretch at 734–994 (LEKEWEALCA…EFALTAVAEE (261 aa)) folds into the Tyrosine-protein phosphatase domain. Substrate contacts are provided by residues aspartate 902 and 934–940 (CSDGAGR). Cysteine 934 serves as the catalytic Phosphocysteine intermediate. An N6-acetyllysine modification is found at lysine 959. Glutamine 979 serves as a coordination point for substrate. The Leucine-based sorting signal signature appears at 993–999 (EEVNAIL).

This sequence belongs to the protein-tyrosine phosphatase family. Receptor class 8 subfamily. Self-associates. Interacts (via cytoplasmic domain) with PTPRN (via cytoplasmic domain). Interacts (precursor form) with CPE. Interacts with HAP1. Interacts with AP2A1 or AP2A2 and AP1G1; indicative for an association with adaptor protein complex 2 (AP-2) and adaptor protein complex 1 (AP-1). Interacts with AP2M1; indicative for an association with adaptor protein complex 2 (AP-2). Interacts with MYO5A. Post-translationally, subject to proteolytic cleavage at multiple sites.

It localises to the cytoplasmic vesicle. The protein resides in the secretory vesicle membrane. Its subcellular location is the secretory vesicle. It is found in the synaptic vesicle membrane. The catalysed reaction is O-phospho-L-tyrosyl-[protein] + H2O = L-tyrosyl-[protein] + phosphate. Plays a role in vesicle-mediated secretory processes. Required for normal accumulation of secretory vesicles in hippocampus, pituitary and pancreatic islets. Required for the accumulation of normal levels of insulin-containing vesicles and preventing their degradation. Plays a role in insulin secretion in response to glucose stimuli. Required for normal accumulation of the neurotransmitters norepinephrine, dopamine and serotonin in the brain. In females, but not in males, required for normal accumulation and secretion of pituitary hormones, such as luteinizing hormone (LH) and follicle-stimulating hormone (FSH). Required to maintain normal levels of renin expression and renin release. May regulate catalytic active protein-tyrosine phosphatases such as PTPRA through dimerization. Has phosphatidylinositol phosphatase activity; the PIPase activity is involved in its ability to regulate insulin secretion. Can dephosphorylate phosphatidylinositol 4,5-biphosphate, phosphatidylinositol 5-phosphate and phosphatidylinositol 3-phosphate. Regulates PI(4,5)P2 level in the plasma membrane and localization of cofilin at the plasma membrane and thus is indirectly involved in regulation of actin dynamics related to cell migration and metastasis; upon hydrolysis of PI(4,5)P2 cofilin is released from the plasma membrane and acts in the cytoplasm in severing F-actin filaments. This is Receptor-type tyrosine-protein phosphatase N2 (Ptprn2) from Rattus norvegicus (Rat).